Reading from the N-terminus, the 402-residue chain is NAD-dependent protein deacetylase sirtuin-7 (402 aa).

Residues 1–23 (MAAGGGLSRSERKAAERVRRLRE) are disordered. A compositionally biased stretch (basic and acidic residues) spans 9-23 (RSERKAAERVRRLRE). Residues 83-330 (PEELRRKVRE…QLLMNELGLE (248 aa)) form the Deacetylase sirtuin-type domain. NAD(+) contacts are provided by residues 108–127 (GAGI…NGVW) and 168–171 (QNCD). Catalysis depends on H188, which acts as the Proton acceptor. Residues C196, C199, C226, and C229 each contribute to the Zn(2+) site. NAD(+)-binding positions include 269-271 (GSS), 298-300 (NLQ), and C316. A disordered region spans residues 355-402 (SHSRKSLCRSREEAPPGDQSDPLASAPPILGGWFGRGCAKRAKRKKVA). Asymmetric dimethylarginine; alternate is present on R390. R390 is subject to Omega-N-methylarginine; alternate. The segment covering 392–402 (CAKRAKRKKVA) has biased composition (basic residues).

It belongs to the sirtuin family. Class IV subfamily. In terms of assembly, interacts with UBTF and the RNA polymerase I complex. Interacts with components of the B-WICH complex, such as MYBBP1A, SMARCA5/SNF2H and BAZ1B/WSTF. Interacts with ELK4, leading to stabilization at target promoters for H3K18Ac deacetylation. Interacts with histone H2A and/or histone H2B. Interacts with DNMT1. Interacts with SIRT1. Requires Zn(2+) as cofactor. Post-translationally, phosphorylated during mitosis. In terms of processing, methylation at Arg-390 by PRMT6 inhibits the H3K18Ac histone deacetylase activity, promoting mitochondria biogenesis and maintaining mitochondria respiration. Ubiquitinated via 'Lys-63'-linked ubiquitin chains. Deubiquitinated by USP7, inhibiting the H3K18Ac histone deacetylase activity and regulating gluconeogenesis. Ubiquitinated by E3 ubiquitin-protein ligase complex containing FBXO7; leading to proteasomal degradation. Detected in liver, spleen and testis. Detected in embryos.

It is found in the nucleus. Its subcellular location is the nucleolus. The protein resides in the nucleoplasm. It localises to the chromosome. The protein localises to the cytoplasm. It carries out the reaction N(6)-acetyl-L-lysyl-[protein] + NAD(+) + H2O = 2''-O-acetyl-ADP-D-ribose + nicotinamide + L-lysyl-[protein]. The enzyme catalyses N(6)-glutaryl-L-lysyl-[protein] + NAD(+) + H2O = 2''-O-glutaryl-ADP-D-ribose + nicotinamide + L-lysyl-[protein]. It catalyses the reaction N(6)-succinyl-L-lysyl-[protein] + NAD(+) + H2O = 2''-O-succinyl-ADP-D-ribose + nicotinamide + L-lysyl-[protein]. The catalysed reaction is N(6)-propanoyl-L-lysyl-[protein] + NAD(+) + H2O = 3''-O-propanoyl-ADP-D-ribose + nicotinamide + L-lysyl-[protein]. It carries out the reaction N(6)-decanoyl-L-lysyl-[protein] + NAD(+) + H2O = 2''-O-decanoyl-ADP-D-ribose + nicotinamide + L-lysyl-[protein]. NAD-dependent protein-lysine deacetylase and deacylase activities are activated by nucleic acids. Histone deacetylase activity is activated by DNA. Protein-lysine deacylase activity is activated by RNA. H3K18Ac histone deacetylase activity is inhibited by methylation at Arg-390. H3K18Ac histone deacetylase activity is inhibited by deubiquitination by USP7. In terms of biological role, NAD-dependent protein-lysine deacylase that can act both as a deacetylase or deacylase (desuccinylase, depropionylase and deglutarylase), depending on the context. Also acts as a dedecanoylase. Specifically mediates deacetylation of histone H3 at 'Lys-18' (H3K18Ac). In contrast to other histone deacetylases, displays strong preference for a specific histone mark, H3K18Ac, directly linked to control of gene expression. H3K18Ac is mainly present around the transcription start site of genes and has been linked to activation of nuclear hormone receptors; SIRT7 thereby acts as a transcription repressor. Moreover, H3K18 hypoacetylation has been reported as a marker of malignancy in various cancers and seems to maintain the transformed phenotype of cancer cells. Also able to mediate deacetylation of histone H3 at 'Lys-36' (H3K36Ac) in the context of nucleosomes. Also mediates deacetylation of non-histone proteins, such as ATM, CDK9, DDX21, DDB1, FBL, FKBP5/FKBP51, GABPB1, RAN, RRP9/U3-55K and POLR1E/PAF53. Enriched in nucleolus where it stimulates transcription activity of the RNA polymerase I complex. Acts by mediating the deacetylation of the RNA polymerase I subunit POLR1E/PAF53, thereby promoting the association of RNA polymerase I with the rDNA promoter region and coding region. In response to metabolic stress, SIRT7 is released from nucleoli leading to hyperacetylation of POLR1E/PAF53 and decreased RNA polymerase I transcription. Required to restore the transcription of ribosomal RNA (rRNA) at the exit from mitosis. Promotes pre-ribosomal RNA (pre-rRNA) cleavage at the 5'-terminal processing site by mediating deacetylation of RRP9/U3-55K, a core subunit of the U3 snoRNP complex. Mediates 'Lys-37' deacetylation of Ran, thereby regulating the nuclear export of NF-kappa-B subunit RELA/p65. Acts as a regulator of DNA damage repair by mediating deacetylation of ATM during the late stages of DNA damage response, promoting ATM dephosphorylation and deactivation. May also deacetylate p53/TP53 and promotes cell survival, however such data need additional confirmation. Suppresses the activity of the DCX (DDB1-CUL4-X-box) E3 ubiquitin-protein ligase complexes by mediating deacetylation of DDB1, which prevents the interaction between DDB1 and CUL4 (CUL4A or CUL4B). Activates RNA polymerase II transcription by mediating deacetylation of CDK9, thereby promoting 'Ser-2' phosphorylation of the C-terminal domain (CTD) of RNA polymerase II. Deacetylates FBL, promoting histone-glutamine methyltransferase activity of FBL. Acts as a regulator of mitochondrial function by catalyzing deacetylation of GABPB1. Regulates Akt/AKT1 activity by mediating deacetylation of FKBP5/FKBP51. Required to prevent R-loop-associated DNA damage and transcription-associated genomic instability by mediating deacetylation and subsequent activation of DDX21, thereby overcoming R-loop-mediated stalling of RNA polymerases. In addition to protein deacetylase activity, also acts as protein-lysine deacylase. Acts as a protein depropionylase by mediating depropionylation of Osterix (SP7), thereby regulating bone formation by osteoblasts. Acts as a histone deglutarylase by mediating deglutarylation of histone H4 on 'Lys-91' (H4K91glu); a mark that destabilizes nucleosomes by promoting dissociation of the H2A-H2B dimers from nucleosomes. Acts as a histone desuccinylase: in response to DNA damage, recruited to DNA double-strand breaks (DSBs) and catalyzes desuccinylation of histone H3 on 'Lys-122' (H3K122succ), thereby promoting chromatin condensation and DSB repair. Also promotes DSB repair by promoting H3K18Ac deacetylation, regulating non-homologous end joining (NHEJ). Along with its role in DNA repair, required for chromosome synapsis during prophase I of female meiosis by catalyzing H3K18Ac deacetylation. Involved in transcriptional repression of LINE-1 retrotransposon via H3K18Ac deacetylation, and promotes their association with the nuclear lamina. Required to stabilize ribosomal DNA (rDNA) heterochromatin and prevent cellular senescence induced by rDNA instability. Acts as a negative regulator of SIRT1 by preventing autodeacetylation of SIRT1, restricting SIRT1 deacetylase activity. This chain is NAD-dependent protein deacetylase sirtuin-7, found in Mus musculus (Mouse).